The chain runs to 153 residues: Transcriptional repressor NrdR (153 aa).

A zinc finger lies at 3–34; sequence CPFCNSTDTQVKDSRSIENDMLIRRRRVCLVC. Residues 49–139 enclose the ATP-cone domain; it reads FMVVKKNGET…VYMNFRNIND (91 aa).

Belongs to the NrdR family. Zn(2+) serves as cofactor.

Functionally, negatively regulates transcription of bacterial ribonucleotide reductase nrd genes and operons by binding to NrdR-boxes. The protein is Transcriptional repressor NrdR of Ehrlichia chaffeensis (strain ATCC CRL-10679 / Arkansas).